A 60-amino-acid chain; its full sequence is UPF0434 protein HCH_02705 (60 aa).

The protein belongs to the UPF0434 family.

The sequence is that of UPF0434 protein HCH_02705 from Hahella chejuensis (strain KCTC 2396).